Consider the following 197-residue polypeptide: Pyridoxal 5'-phosphate synthase subunit PdxT (197 aa).

50-52 (GES) is a binding site for L-glutamine. Catalysis depends on Cys-82, which acts as the Nucleophile. Residues Arg-111 and 140–141 (IR) contribute to the L-glutamine site. Catalysis depends on charge relay system residues His-176 and Glu-178.

The protein belongs to the glutaminase PdxT/SNO family. As to quaternary structure, in the presence of PdxS, forms a dodecamer of heterodimers. Only shows activity in the heterodimer.

It catalyses the reaction aldehydo-D-ribose 5-phosphate + D-glyceraldehyde 3-phosphate + L-glutamine = pyridoxal 5'-phosphate + L-glutamate + phosphate + 3 H2O + H(+). The enzyme catalyses L-glutamine + H2O = L-glutamate + NH4(+). The protein operates within cofactor biosynthesis; pyridoxal 5'-phosphate biosynthesis. Functionally, catalyzes the hydrolysis of glutamine to glutamate and ammonia as part of the biosynthesis of pyridoxal 5'-phosphate. The resulting ammonia molecule is channeled to the active site of PdxS. This Streptomyces griseus subsp. griseus (strain JCM 4626 / CBS 651.72 / NBRC 13350 / KCC S-0626 / ISP 5235) protein is Pyridoxal 5'-phosphate synthase subunit PdxT.